We begin with the raw amino-acid sequence, 44 residues long: Protein PsbN (44 aa).

Residues 6-26 (FFFTFFLWFLLLSATGYSIYV) traverse the membrane as a helical segment.

The protein belongs to the PsbN family.

Its subcellular location is the plastid. It is found in the chloroplast thylakoid membrane. In terms of biological role, may play a role in photosystem I and II biogenesis. This is Protein PsbN from Tetradesmus obliquus (Green alga).